We begin with the raw amino-acid sequence, 70 residues long: Beta-defensin 131B (70 aa).

Positions 1–22 (MRVLFFVFGVLSLMSTVPPTRS) are cleaved as a signal peptide. 3 disulfide bridges follow: Cys-29/Cys-56, Cys-36/Cys-50, and Cys-40/Cys-57.

The protein belongs to the beta-defensin family.

The protein resides in the secreted. Has antibacterial activity. The polypeptide is Beta-defensin 131B (Homo sapiens (Human)).